The following is a 231-amino-acid chain: 7-cyano-7-deazaguanine synthase (231 aa).

Phe-8 to Leu-18 provides a ligand contact to ATP. Zn(2+)-binding residues include Cys-188, Cys-197, Cys-200, and Cys-203.

Belongs to the QueC family. It depends on Zn(2+) as a cofactor.

The enzyme catalyses 7-carboxy-7-deazaguanine + NH4(+) + ATP = 7-cyano-7-deazaguanine + ADP + phosphate + H2O + H(+). Its pathway is purine metabolism; 7-cyano-7-deazaguanine biosynthesis. In terms of biological role, catalyzes the ATP-dependent conversion of 7-carboxy-7-deazaguanine (CDG) to 7-cyano-7-deazaguanine (preQ(0)). In Salmonella paratyphi A (strain ATCC 9150 / SARB42), this protein is 7-cyano-7-deazaguanine synthase.